Consider the following 205-residue polypeptide: MSATPRPHDLVWLNHASALEDIAEPWVAQQWRAALPVVVRRDVDDQARVPVGVRGMKREQRAAGWVQARNIVRSVTPEMLVDREVLLHSPFVSQPPVQGAIALTLHRWPWGWGVTGSTGYALATEIPVLHAASDLDLLIRAPQPLDREALLEWQTRVAQLPCRADTQVETPYGAFALNEWLRDGRALLKTSRGARLTATPWHREE.

Active-site residues include Asp-134 and Asp-136.

Belongs to the MdcG family.

It catalyses the reaction apo-[malonate decarboxylase ACP] + 2'-(5''-triphospho-alpha-D-ribosyl)-3'-dephospho-CoA = holo-[malonate decarboxylase ACP] + diphosphate. Functionally, transfers 2'-(5-triphosphoribosyl)-3'-dephosphocoenzyme-A to the apo-[acyl-carrier-protein] of the malonate decarboxylase to yield holo-[acyl-carrier-protein]. This is Phosphoribosyl-dephospho-CoA transferase (mdcG) from Klebsiella pneumoniae.